A 132-amino-acid chain; its full sequence is MGSLMLLFVETTRNSSACIFPVILNELSSTVETITHFPEVTDGECVFPFHYKNGTYYDCIKSKARHKWCSLNKTYEGYWKFCSAEDFANCVFPFWYRRLIYWECTDDGEAFGKKWCSLTKNFNKDRIWKYCE.

Positions M1 to A17 are cleaved as a signal peptide. 2 consecutive Fibronectin type-II domains span residues V40–A84 and E85–E132. 4 disulfide bridges follow: C45/C69, C59/C82, C90/C116, and C104/C131. A glycan (N-linked (GlcNAc...) asparagine) is linked at N53.

This sequence belongs to the seminal plasma protein family. In terms of tissue distribution, expressed only in the epididymis.

Its subcellular location is the secreted. Binds sperm in vitro and promotes sperm capacitation. Specifically promotes capacitation induced by high density lipoproteins (HDLs). Also binds heparin, phospholipid liposomes, and weakly to gelatin. Does not bind chondroitin sulfate B. The chain is Binder of sperm protein homolog 1 (BSPH1) from Homo sapiens (Human).